The following is a 225-amino-acid chain: Ribonuclease 3 (225 aa).

Positions V5 to D127 constitute an RNase III domain. E40 contacts Mg(2+). D44 is an active-site residue. The Mg(2+) site is built by D113 and E116. Residue E116 is part of the active site. The region spanning D154 to N223 is the DRBM domain.

Belongs to the ribonuclease III family. As to quaternary structure, homodimer. The cofactor is Mg(2+).

The protein resides in the cytoplasm. The enzyme catalyses Endonucleolytic cleavage to 5'-phosphomonoester.. Functionally, digests double-stranded RNA. Involved in the processing of primary rRNA transcript to yield the immediate precursors to the large and small rRNAs (23S and 16S). Processes some mRNAs, and tRNAs when they are encoded in the rRNA operon. Processes pre-crRNA and tracrRNA of type II CRISPR loci if present in the organism. In Pseudoalteromonas translucida (strain TAC 125), this protein is Ribonuclease 3.